We begin with the raw amino-acid sequence, 250 residues long: Probable transcriptional regulatory protein Cpha266_0538 (250 aa).

Belongs to the TACO1 family.

The protein localises to the cytoplasm. The sequence is that of Probable transcriptional regulatory protein Cpha266_0538 from Chlorobium phaeobacteroides (strain DSM 266 / SMG 266 / 2430).